Reading from the N-terminus, the 524-residue chain is Na(+)/H(+) antiporter NhaB (524 aa).

Transmembrane regions (helical) follow at residues 13–33 (FLGN…IINP), 98–118 (LLLV…LFVF), 140–160 (AFLS…SVSV), 239–259 (FFIR…LVCL), 304–324 (AIIG…VGLV), 325–345 (GLSV…HSLG), 358–378 (LTVF…TPII), 448–468 (ATPN…APLI), and 479–499 (ALPY…FLLV).

It belongs to the NhaB Na(+)/H(+) (TC 2.A.34) antiporter family.

Its subcellular location is the cell inner membrane. It catalyses the reaction 2 Na(+)(in) + 3 H(+)(out) = 2 Na(+)(out) + 3 H(+)(in). In terms of biological role, na(+)/H(+) antiporter that extrudes sodium in exchange for external protons. The chain is Na(+)/H(+) antiporter NhaB from Yersinia pseudotuberculosis serotype I (strain IP32953).